A 379-amino-acid chain; its full sequence is Forkhead box protein E1 (379 aa).

Over residues 1–11 (MTAESQQSPTR) the composition is skewed to polar residues. Residues 1-65 (MTAESQQSPT…RRRKRPLQKG (65 aa)) are disordered. Residues 54–63 (KGRRRKRPLQ) show a composition bias toward basic residues. The fork-head DNA-binding region spans 66-160 (KPPYSYIALI…DSGSFLRRRK (95 aa)). The disordered stretch occupies residues 239–265 (HSGSEHAQPPNRSISPEVNSTSSSSCN). A compositionally biased stretch (low complexity) spans 251 to 265 (SISPEVNSTSSSSCN).

In terms of tissue distribution, first expressed at late neural tube and early tailbud stages in the hypophyseal placode. Expression continues in the developing pituitary at late tailbud stages. As development progresses, expressed in the mesoderm of the branchial arches. At stage 38, expressed in the developing thyroid and in the pharyngeal endoderm.

It localises to the nucleus. In terms of biological role, transcription factor that binds consensus sites on a variety of gene promoters and activate their transcription. The sequence is that of Forkhead box protein E1 from Xenopus laevis (African clawed frog).